A 381-amino-acid chain; its full sequence is Secretion apparatus protein BsaZ (381 aa).

4 consecutive transmembrane segments (helical) span residues 28–48, 80–100, 134–154, and 175–195; these read IVAL…VDLT, IAAP…LVQS, AVKA…FADL, and IVLT…VLIV. A disordered region spans residues 343 to 381; it reads NRGGPPREMPPEATHAPDAHGGDAASGGATSAQAGERNA. Residues 364–381 are compositionally biased toward low complexity; the sequence is GDAASGGATSAQAGERNA.

This sequence belongs to the type III secretion exporter family.

The protein localises to the cell membrane. Part of the bsa type III secretion system, is involved in the intracellular replication of invading bacteria inside the host cell. Probably necessary for the lysis of the vacuole membrane and escape into the host cell cytoplasm. This is Secretion apparatus protein BsaZ (bsaZ) from Burkholderia thailandensis (strain ATCC 700388 / DSM 13276 / CCUG 48851 / CIP 106301 / E264).